The sequence spans 231 residues: NADH-ubiquinone oxidoreductase chain 4 (231 aa).

The next 6 membrane-spanning stretches (helical) occupy residues 1-21, 34-54, 63-85, 89-111, 128-148, and 156-176; these read PIAG…YGII, LFLP…LTCL, IAYS…TPWG, AMAL…NTTY, ILPM…AIPP, and LLIM…LGLS.

The protein belongs to the complex I subunit 4 family.

The protein resides in the mitochondrion membrane. It catalyses the reaction a ubiquinone + NADH + 5 H(+)(in) = a ubiquinol + NAD(+) + 4 H(+)(out). Core subunit of the mitochondrial membrane respiratory chain NADH dehydrogenase (Complex I) that is believed to belong to the minimal assembly required for catalysis. Complex I functions in the transfer of electrons from NADH to the respiratory chain. The immediate electron acceptor for the enzyme is believed to be ubiquinone. This Crotalus concolor (Midget faded rattlesnake) protein is NADH-ubiquinone oxidoreductase chain 4 (MT-ND4).